The following is a 335-amino-acid chain: Probable cytosolic iron-sulfur protein assembly protein Ciao1 (335 aa).

7 WD repeats span residues 12–51 (GHKG…WSTK), 57–96 (GHKR…FECN), 101–140 (GHEN…EFEC), 146–185 (AHTQ…SDWD), 192–231 (SHTS…NDAG), 250–289 (QHSR…KRDE), and 301–335 (AHEQ…KVDD).

This sequence belongs to the WD repeat CIA1 family.

In terms of biological role, essential component of the cytosolic iron-sulfur (Fe/S) protein assembly machinery. Required for the maturation of extramitochondrial Fe/S proteins. This chain is Probable cytosolic iron-sulfur protein assembly protein Ciao1, found in Drosophila pseudoobscura pseudoobscura (Fruit fly).